The chain runs to 177 residues: Thymidine kinase (177 aa).

Residue 11–18 (GPMFSGKS) coordinates ATP. Glu83 serves as the catalytic Proton acceptor. Phe113 contacts substrate. The Zn(2+) site is built by Cys138 and Cys141. 157 to 161 (IEIIG) lines the substrate pocket. Residues Cys170 and Cys173 each coordinate Zn(2+).

The protein belongs to the thymidine kinase family. Homotetramer. Two molecules of substrate bind to each enzyme tetramer.

The enzyme catalyses thymidine + ATP = dTMP + ADP + H(+). Functionally, phosphorylates thymidine and thymidine analogs, such as azidothymidine (AZT). Part of the salvage pathway for pyrimidine deoxyribonucleotide synthesis. This chain is Thymidine kinase (OPG101), found in Vaccinia virus (strain Tian Tan) (VACV).